A 268-amino-acid polypeptide reads, in one-letter code: Hemin import ATP-binding protein HmuV (268 aa).

In terms of domain architecture, ABC transporter spans 5–241 (LKAEAASFAL…ELIADVFDVA (237 aa)). 37 to 44 (GPNGAGKS) provides a ligand contact to ATP.

Belongs to the ABC transporter superfamily. Heme (hemin) importer (TC 3.A.1.14.5) family. In terms of assembly, the complex is composed of two ATP-binding proteins (HmuV), two transmembrane proteins (HmuU) and a solute-binding protein (HmuT).

Its subcellular location is the cell inner membrane. Part of the ABC transporter complex HmuTUV involved in hemin import. Responsible for energy coupling to the transport system. This Rhodopseudomonas palustris (strain ATCC BAA-98 / CGA009) protein is Hemin import ATP-binding protein HmuV.